The chain runs to 181 residues: MVASGIPALSLFLLMQGSVDGNGIQGFFYPWSCEGDVWDRESCGGQAAIENPNLCLRLRCCYRDGVCYHQRPDETMRRKHMWALGWTCGGLLFLISSICLFWWAKRRDMLHLPGFLKGKCDLSRTVSLLSKDRGTLSDKKTSAGSVPTSLPTEGNADVSGATEGEGTTEGGEETEGGEDED.

Residues 1 to 21 form the signal peptide; the sequence is MVASGIPALSLFLLMQGSVDG. Residues 22–81 lie on the Extracellular side of the membrane; sequence NGIQGFFYPWSCEGDVWDRESCGGQAAIENPNLCLRLRCCYRDGVCYHQRPDETMRRKHM. The P-type domain maps to 31–71; the sequence is WSCEGDVWDRESCGGQAAIENPNLCLRLRCCYRDGVCYHQR. 3 disulfide bridges follow: Cys33-Cys61, Cys43-Cys60, and Cys55-Cys67. The chain crosses the membrane as a helical span at residues 82 to 102; sequence WALGWTCGGLLFLISSICLFW. Residues 103-181 are Cytoplasmic-facing; that stretch reads WAKRRDMLHL…EETEGGEDED (79 aa). Residues 135 to 181 are disordered; the sequence is TLSDKKTSAGSVPTSLPTEGNADVSGATEGEGTTEGGEETEGGEDED. Positions 142–152 are enriched in polar residues; that stretch reads SAGSVPTSLPT. A compositionally biased stretch (acidic residues) spans 170–181; sequence GGEETEGGEDED.

Its subcellular location is the membrane. In Canis lupus familiaris (Dog), this protein is Transmembrane protein 190 (TMEM190).